The chain runs to 538 residues: ESX-3 secretion system ATPase EccB3 (538 aa).

Basic and acidic residues predominate over residues 1 to 16; it reads MTNQQHDHDFDHDRRS. The disordered stretch occupies residues 1 to 25; it reads MTNQQHDHDFDHDRRSFASRTPVNN. Residues 75-95 form a helical membrane-spanning segment; it reads VLMGVLIVITGLIGSFVFSLI.

This sequence belongs to the EccB family. Part of the ESX-3 / type VII secretion system (T7SS), which is composed of cytosolic and membrane components. The ESX-3 membrane complex is composed of EccB3, EccC3, EccD3 and EccE3.

It localises to the cell inner membrane. Its function is as follows. An ATPase. Part of the ESX-3 specialized secretion system, which is important for iron and zinc uptake or homeostasis. The sequence is that of ESX-3 secretion system ATPase EccB3 from Mycobacterium tuberculosis (strain CDC 1551 / Oshkosh).